The chain runs to 195 residues: Probable GTP-binding protein EngB (195 aa).

The EngB-type G domain occupies 24–195; that stretch reads ELPEIALAGR…EAWDAILEKL (172 aa). Residues 32–39, 59–63, 77–80, 144–147, and 176–178 contribute to the GTP site; these read GRSNVGKS, GKTQL, DVPG, TKAD, and FSS. S39 and T61 together coordinate Mg(2+).

Belongs to the TRAFAC class TrmE-Era-EngA-EngB-Septin-like GTPase superfamily. EngB GTPase family. Mg(2+) is required as a cofactor.

Necessary for normal cell division and for the maintenance of normal septation. The protein is Probable GTP-binding protein EngB of Streptococcus pneumoniae (strain Hungary19A-6).